We begin with the raw amino-acid sequence, 387 residues long: Signal-regulatory protein gamma (387 aa).

A signal peptide spans 1-28 (MPVPASWPHPPGPFLLLTLLLGLTEVAG). One can recognise an Ig-like V-type domain in the interval 29-137 (EEELQMIQPE…ENVEFKSGPG (109 aa)). Residues 29–360 (EEELQMIQPE…QKDQSSDATP (332 aa)) lie on the Extracellular side of the membrane. 2 disulfides stabilise this stretch: C53–C119 and C168–C226. Ig-like C1-type domains are found at residues 146-245 (PSAP…ANLS) and 252-340 (PTLE…LAVS). 4 N-linked (GlcNAc...) asparagine glycosylation sites follow: N243, N268, N309, and N317. An intrachain disulfide couples C271 to C329. A helical transmembrane segment spans residues 361–383 (GPASSLTALLLIAVLLGPIYVPW). The Cytoplasmic portion of the chain corresponds to 384-387 (KQKT).

In terms of assembly, interacts with CD47. As to expression, detected in liver, and at very low levels in brain, heart, lung, pancreas, kidney, placenta and skeletal muscle. Expressed on CD4+ T-cells, CD8+ T-cells, CD56-bright natural killer (NK) cells, CD20+ cells, and all activated NK cells. Mainly present in the paracortical T-cell area of lymph nodes, with only sparse positive cells in the mantle and in the germinal center of B-cell follicles. In the thymus, primarily expressed in the medulla on mature T-lymphocytes that have undergone thymic selection.

It localises to the membrane. Probable immunoglobulin-like cell surface receptor. On binding with CD47, mediates cell-cell adhesion. Engagement on T-cells by CD47 on antigen-presenting cells results in enhanced antigen-specific T-cell proliferation and costimulates T-cell activation. The chain is Signal-regulatory protein gamma (SIRPG) from Homo sapiens (Human).